A 92-amino-acid chain; its full sequence is Small ribosomal subunit protein uS19c (92 aa).

The protein belongs to the universal ribosomal protein uS19 family.

It localises to the plastid. The protein localises to the chloroplast. In terms of biological role, protein S19 forms a complex with S13 that binds strongly to the 16S ribosomal RNA. In Phaseolus angularis (Azuki bean), this protein is Small ribosomal subunit protein uS19c.